The chain runs to 436 residues: Xylose isomerase (436 aa).

Active-site residues include His-100 and Asp-103. Residues Glu-231, Glu-267, His-270, Asp-295, Asp-306, Asp-308, and Asp-338 each coordinate Mg(2+).

It belongs to the xylose isomerase family. As to quaternary structure, homotetramer. It depends on Mg(2+) as a cofactor.

Its subcellular location is the cytoplasm. The enzyme catalyses alpha-D-xylose = alpha-D-xylulofuranose. This is Xylose isomerase from Rhizobium etli (strain ATCC 51251 / DSM 11541 / JCM 21823 / NBRC 15573 / CFN 42).